A 352-amino-acid chain; its full sequence is Geranylgeranyl transferase type-1 subunit beta (352 aa).

PFTB repeat units lie at residues 135-180, 187-228, 236-276, and 283-325; these read VNKK…FILD, KESA…SLLG, FKEQ…MMID, and FASI…SFGN. Residues 213-215 and 255-258 each bind geranylgeranyl diphosphate; these read HGG and RTNK. The Zn(2+) site is built by aspartate 261 and cysteine 263. Residue 264-267 participates in geranylgeranyl diphosphate binding; it reads YAFW. A Zn(2+)-binding site is contributed by histidine 313.

It belongs to the protein prenyltransferase subunit beta family. As to quaternary structure, heterodimer of an alpha and a beta subunit. The cofactor is Zn(2+). Mg(2+) is required as a cofactor.

The catalysed reaction is geranylgeranyl diphosphate + L-cysteinyl-[protein] = S-geranylgeranyl-L-cysteinyl-[protein] + diphosphate. In terms of biological role, catalyzes the transfer of a geranyl-geranyl moiety from geranyl-geranyl pyrophosphate to a cysteine at the fourth position from the C-terminus of proteins having the C-terminal sequence Cys-aliphatic-aliphatic-X. The protein is Geranylgeranyl transferase type-1 subunit beta (pggt1b) of Dictyostelium discoideum (Social amoeba).